A 146-amino-acid polypeptide reads, in one-letter code: Hemoglobin subunit beta (146 aa).

The region spanning 2 to 146 (FLTAEEKSLV…VANALAHKYH (145 aa)) is the Globin domain. Ser-44 carries the phosphoserine modification. An N6-acetyllysine modification is found at Lys-59. Residue His-63 coordinates heme b. Lys-82 carries the N6-acetyllysine modification. His-92 is a heme b binding site. Cys-93 carries the S-nitrosocysteine modification. At Lys-144 the chain carries N6-acetyllysine.

The protein belongs to the globin family. In terms of assembly, heterotetramer of two alpha chains and two beta chains. As to expression, red blood cells.

Involved in oxygen transport from the lung to the various peripheral tissues. In Proteles cristata (Aardwolf), this protein is Hemoglobin subunit beta (HBB).